Reading from the N-terminus, the 871-residue chain is Coatomer subunit gamma-2 (871 aa).

Over residues 1-11 (MIKKFDKKDEE) the composition is skewed to basic and acidic residues. The disordered stretch occupies residues 1–21 (MIKKFDKKDEESGSGSNPFQH). 6 HEAT repeats span residues 64–101 (TEAT…ISED), 283–320 (RELA…KHPS), 321–355 (AVTA…GSES), 356–392 (SVDR…KYPR), 395–430 (SVMM…ENPE), and 467–504 (PVPS…QNES). A Phosphothreonine modification is found at Thr-594.

This sequence belongs to the COPG family. Oligomeric complex. Binds to CDC42. Interacts with JAGN1. Interacts with TMED10 (via cytoplasmic domain).

The protein resides in the cytoplasm. It is found in the cytosol. It localises to the golgi apparatus membrane. Its subcellular location is the cytoplasmic vesicle. The protein localises to the COPI-coated vesicle membrane. In terms of biological role, the coatomer is a cytosolic protein complex that binds to dilysine motifs and reversibly associates with Golgi non-clathrin-coated vesicles, which further mediate biosynthetic protein transport from the ER, via the Golgi up to the trans Golgi network. Coatomer complex is required for budding from Golgi membranes, and is essential for the retrograde Golgi-to-ER transport of dilysine-tagged proteins. In mammals, the coatomer can only be recruited by membranes associated to ADP-ribosylation factors (ARFs), which are small GTP-binding proteins; the complex also influences the Golgi structural integrity, as well as the processing, activity, and endocytic recycling of LDL receptors. The polypeptide is Coatomer subunit gamma-2 (COPG2) (Homo sapiens (Human)).